Consider the following 119-residue polypeptide: Large ribosomal subunit protein uL18 (119 aa).

Belongs to the universal ribosomal protein uL18 family. Part of the 50S ribosomal subunit; part of the 5S rRNA/L5/L18/L25 subcomplex. Contacts the 5S and 23S rRNAs.

Its function is as follows. This is one of the proteins that bind and probably mediate the attachment of the 5S RNA into the large ribosomal subunit, where it forms part of the central protuberance. The chain is Large ribosomal subunit protein uL18 from Clostridium botulinum (strain Langeland / NCTC 10281 / Type F).